We begin with the raw amino-acid sequence, 331 residues long: HTH-type transcriptional regulator RipA (331 aa).

The region spanning 112–209 (RAVAQVLVSN…GATPSTFTTG (98 aa)) is the HTH araC/xylS-type domain. DNA-binding regions (H-T-H motif) lie at residues 129–150 (EEFAEIQGVSARTLQRQFLKST) and 176–199 (ISVVANLVGFAATSSLTRAFRRHT).

Its function is as follows. Under iron limitation, RipA negatively controls the expression of the acn (aconitase), catA (catechol 1,2 dioxygenase), leuCD (isopropylmalate dehydratase), narKGHJI (nitrite/nitrate transporter and nitrate reductase), sdhCAB (succinate dehydrogenase), pta (phosphotransacetylase) and katA (catalase) genes. Binds to the consensus sequence in the promoter region. The protein is HTH-type transcriptional regulator RipA of Corynebacterium glutamicum (strain ATCC 13032 / DSM 20300 / JCM 1318 / BCRC 11384 / CCUG 27702 / LMG 3730 / NBRC 12168 / NCIMB 10025 / NRRL B-2784 / 534).